We begin with the raw amino-acid sequence, 473 residues long: Photosystem II CP43 reaction center protein (473 aa).

Residues 1–14 (MKTLYSLRRFYPVE) constitute a propeptide that is removed on maturation. The residue at position 15 (threonine 15) is an N-acetylthreonine. At threonine 15 the chain carries Phosphothreonine. The next 5 membrane-spanning stretches (helical) occupy residues 69 to 93 (LFEVAHFVPEKPMYEQGLILLPHLA), 134 to 155 (LLGPETLEESFPFFGYVWKDRN), 178 to 200 (KALYFGGVYDTWAPGGGDVRKIT), 255 to 275 (KPFAWARRAFVWSGEAYLSYS), and 291 to 312 (WFNNTAYPSEFYGPTGPEASQA). Position 367 (glutamate 367) interacts with [CaMn4O5] cluster. A helical membrane pass occupies residues 447 to 471 (RARAAAAGFEKGIDRDLEPVLSMTP).

Belongs to the PsbB/PsbC family. PsbC subfamily. PSII is composed of 1 copy each of membrane proteins PsbA, PsbB, PsbC, PsbD, PsbE, PsbF, PsbH, PsbI, PsbJ, PsbK, PsbL, PsbM, PsbT, PsbX, PsbY, PsbZ, Psb30/Ycf12, at least 3 peripheral proteins of the oxygen-evolving complex and a large number of cofactors. It forms dimeric complexes. Requires Binds multiple chlorophylls and provides some of the ligands for the Ca-4Mn-5O cluster of the oxygen-evolving complex. It may also provide a ligand for a Cl- that is required for oxygen evolution. PSII binds additional chlorophylls, carotenoids and specific lipids. as cofactor.

The protein localises to the plastid. Its subcellular location is the chloroplast thylakoid membrane. Functionally, one of the components of the core complex of photosystem II (PSII). It binds chlorophyll and helps catalyze the primary light-induced photochemical processes of PSII. PSII is a light-driven water:plastoquinone oxidoreductase, using light energy to abstract electrons from H(2)O, generating O(2) and a proton gradient subsequently used for ATP formation. This is Photosystem II CP43 reaction center protein from Phalaenopsis aphrodite subsp. formosana (Moth orchid).